Consider the following 98-residue polypeptide: Small ribosomal subunit protein bS6 (98 aa).

This sequence belongs to the bacterial ribosomal protein bS6 family.

In terms of biological role, binds together with bS18 to 16S ribosomal RNA. In Lactobacillus helveticus (strain DPC 4571), this protein is Small ribosomal subunit protein bS6.